A 140-amino-acid polypeptide reads, in one-letter code: Transcription antitermination protein NusB (140 aa).

It belongs to the NusB family.

Its function is as follows. Involved in transcription antitermination. Required for transcription of ribosomal RNA (rRNA) genes. Binds specifically to the boxA antiterminator sequence of the ribosomal RNA (rrn) operons. The chain is Transcription antitermination protein NusB from Sorangium cellulosum (strain So ce56) (Polyangium cellulosum (strain So ce56)).